The following is a 382-amino-acid chain: Histidinol-phosphate aminotransferase (382 aa).

The disordered stretch occupies residues 1 to 28 (MTSAPRPRPTLDDLPLREDLRGKSPYGA). Basic and acidic residues predominate over residues 9–22 (PTLDDLPLREDLRG). Position 233 is an N6-(pyridoxal phosphate)lysine (lysine 233).

This sequence belongs to the class-II pyridoxal-phosphate-dependent aminotransferase family. Histidinol-phosphate aminotransferase subfamily. Homodimer. Pyridoxal 5'-phosphate is required as a cofactor.

It carries out the reaction L-histidinol phosphate + 2-oxoglutarate = 3-(imidazol-4-yl)-2-oxopropyl phosphate + L-glutamate. It participates in amino-acid biosynthesis; L-histidine biosynthesis; L-histidine from 5-phospho-alpha-D-ribose 1-diphosphate: step 7/9. In Mycobacterium marinum (strain ATCC BAA-535 / M), this protein is Histidinol-phosphate aminotransferase.